Here is an 811-residue protein sequence, read N- to C-terminus: Ribonucleoside-diphosphate reductase large subunit (811 aa).

Residues Thr231, 246–247 (SC), Gly277, 450–454 (NLCTE), and 636–640 (PTASS) each bind substrate. The cysteines at positions 247 and 467 are disulfide-linked. Asn450 functions as the Proton acceptor in the catalytic mechanism. The Cysteine radical intermediate role is filled by Cys452. Glu454 acts as the Proton acceptor in catalysis.

It belongs to the ribonucleoside diphosphate reductase large chain family. Heterotetramer composed of a homodimer of the large subunit (R1) and a homodimer of the small subunit (R2). Larger multisubunit protein complex are also active, composed of (R1)n(R2)n.

It catalyses the reaction a 2'-deoxyribonucleoside 5'-diphosphate + [thioredoxin]-disulfide + H2O = a ribonucleoside 5'-diphosphate + [thioredoxin]-dithiol. Functionally, ribonucleoside-diphosphate reductase holoenzyme provides the precursors necessary for viral DNA synthesis. Allows virus growth in non-dividing cells, as well as reactivation from latency in infected hosts. Catalyzes the biosynthesis of deoxyribonucleotides from the corresponding ribonucleotides. The sequence is that of Ribonucleoside-diphosphate reductase large subunit from Amazona oratrix (yellow-headed parrot).